We begin with the raw amino-acid sequence, 319 residues long: Protease HtpX homolog (319 aa).

2 consecutive transmembrane segments (helical) span residues 3–23 (LTVLALIGGYIVVLGVAAWAL) and 32–52 (TGVAFMLSLLALAMVLVQWLF). His-134 lines the Zn(2+) pocket. Glu-135 is an active-site residue. Residue His-138 participates in Zn(2+) binding. The next 2 membrane-spanning stretches (helical) occupy residues 146-166 (VILALSLIPIAAFLIGRTLVW) and 182-202 (MALVAVGAALLAAGMVFQLIV). Zn(2+) is bound at residue Glu-210.

This sequence belongs to the peptidase M48B family. Zn(2+) is required as a cofactor.

Its subcellular location is the cell membrane. The protein is Protease HtpX homolog of Aeropyrum pernix (strain ATCC 700893 / DSM 11879 / JCM 9820 / NBRC 100138 / K1).